Here is a 310-residue protein sequence, read N- to C-terminus: GTP-binding protein GTR1 (310 aa).

The GTP site is built by serine 15, glycine 18, lysine 19, serine 20, serine 21, threonine 35, threonine 41, glycine 64, histidine 126, aspartate 129, and isoleucine 166.

This sequence belongs to the GTR/RAG GTP-binding protein family. Heterodimer; with GTR2. Component of the GSE complex composed of GTR1, GTR2, SLM4, MEH1 and LTV1. Interacts with GTR2; the interaction is direct. Interacts with TOR1.

The protein localises to the vacuole membrane. It carries out the reaction GTP + H2O = GDP + phosphate + H(+). GTPase involved in activation of the TORC1 signaling pathway, which promotes growth and represses autophagy in nutrient-rich conditions. Also required for TORC1 inactivation during nitrogen starvation. Required for intracellular sorting of GAP1 out of the endosome. Functionally associated with the inorganic phosphate transporter PHO84, and may be involved in regulating its function or localization. This is GTP-binding protein GTR1 (GTR1) from Saccharomyces cerevisiae (strain ATCC 204508 / S288c) (Baker's yeast).